A 321-amino-acid polypeptide reads, in one-letter code: Phospho-N-acetylmuramoyl-pentapeptide-transferase (321 aa).

A run of 10 helical transmembrane segments spans residues 1–21, 50–70, 76–96, 112–132, 140–160, 176–196, 200–220, 225–245, 250–270, and 300–320; these read MIFV…PVLI, MGGL…IIFV, IILL…DDYI, FLAQ…FHLV, IPFT…IVFW, GLAT…SFVL, AIGI…PYNI, VFMG…ISIM, LSLI…MLQV, and VVTV…WIGV.

This sequence belongs to the glycosyltransferase 4 family. MraY subfamily. Mg(2+) serves as cofactor.

It localises to the cell membrane. The enzyme catalyses UDP-N-acetyl-alpha-D-muramoyl-L-alanyl-gamma-D-glutamyl-L-lysyl-D-alanyl-D-alanine + di-trans,octa-cis-undecaprenyl phosphate = Mur2Ac(oyl-L-Ala-gamma-D-Glu-L-Lys-D-Ala-D-Ala)-di-trans,octa-cis-undecaprenyl diphosphate + UMP. The protein operates within cell wall biogenesis; peptidoglycan biosynthesis. Its function is as follows. Catalyzes the initial step of the lipid cycle reactions in the biosynthesis of the cell wall peptidoglycan: transfers peptidoglycan precursor phospho-MurNAc-pentapeptide from UDP-MurNAc-pentapeptide onto the lipid carrier undecaprenyl phosphate, yielding undecaprenyl-pyrophosphoryl-MurNAc-pentapeptide, known as lipid I. In Staphylococcus aureus (strain Mu50 / ATCC 700699), this protein is Phospho-N-acetylmuramoyl-pentapeptide-transferase.